A 491-amino-acid chain; its full sequence is Dipeptide and tripeptide permease B (491 aa).

The Cytoplasmic segment spans residues 1-26; sequence MNNTAPGLLHQPKPFFMIFFVELWER. The helical transmembrane segment at 27 to 47 threads the bilayer; it reads FGYYGVQGILAVFFVKQLGFS. At 48–51 the chain is on the periplasmic side; sequence QEQA. A helical transmembrane segment spans residues 52 to 72; it reads FITFGAFAALVYGLISIGGYV. The Cytoplasmic segment spans residues 73-81; that stretch reads GDHLLGTKR. A helical membrane pass occupies residues 82-102; that stretch reads TMVLGAIVLALGYFMTGMSLL. The Periplasmic segment spans residues 103 to 105; that stretch reads KPE. A helical membrane pass occupies residues 106–126; the sequence is MIFIALGTIAVGNGLFKANPA. Residues 127–145 are Cytoplasmic-facing; it reads SLLSKCYPPKDPRLDGAFT. The chain crosses the membrane as a helical span at residues 146-166; sequence LFYMSINIGSLLSLSLAPIIA. Residues 167–171 are Periplasmic-facing; the sequence is ERFGY. Residues 172 to 192 traverse the membrane as a helical segment; that stretch reads AVTYNLCGLGLIIALLVYFAC. Residues 193 to 210 lie on the Cytoplasmic side of the membrane; that stretch reads RGMVRSIGSAPDHQPLNY. A helical membrane pass occupies residues 211–231; it reads GKLLLVLAGAVVMIFLCAWLM. H232 is a topological domain (periplasmic). The helical transmembrane segment at 233–253 threads the bilayer; that stretch reads NVGVANIVLIAVSAVVLYFFF. At 254–266 the chain is on the cytoplasmic side; that stretch reads REAFKQDKTGRNR. Residues 267-287 form a helical membrane-spanning segment; the sequence is MFVAFILMIEAVLFYILYAQM. Residues 288 to 312 lie on the Periplasmic side of the membrane; the sequence is PTSLNFFAINNVRHELLGFAINPVS. Residues 313-335 traverse the membrane as a helical segment; that stretch reads FQALNPFWVVVASPILASIYTRL. Topologically, residues 336–349 are cytoplasmic; that stretch reads GSRGRDMTMPTKFT. Residues 350–370 traverse the membrane as a helical segment; the sequence is LGMLLCSLGFLTAAAAGMWFA. At 371–378 the chain is on the periplasmic side; that stretch reads DAQGLTSP. A helical membrane pass occupies residues 379-399; it reads WFVVLVYLFQSLGELMISALG. At 400–423 the chain is on the cytoplasmic side; sequence LAMVAALVPQYLMGFILGMWFLTQ. Residues 424-444 traverse the membrane as a helical segment; it reads AAAFLLGGYVATFTAVPAGIH. Over 445 to 454 the chain is Periplasmic; the sequence is DPLQTLPIYT. The chain crosses the membrane as a helical span at residues 455–475; the sequence is GVFGKIGIATLIVTLVMAAMV. The Cytoplasmic segment spans residues 476–491; that stretch reads PWLNRMMNTPADGQKA.

This sequence belongs to the major facilitator superfamily. Proton-dependent oligopeptide transporter (POT/PTR) (TC 2.A.17) family. DtpB subfamily.

It is found in the cell inner membrane. In terms of biological role, proton-dependent permease that transports di- and tripeptides. This chain is Dipeptide and tripeptide permease B, found in Edwardsiella piscicida.